The chain runs to 413 residues: Dual-specificity RNA methyltransferase RlmN (413 aa).

The active-site Proton acceptor is E126. The Radical SAM core domain occupies 132 to 381; it reads EEGRGTLCIS…IRTPRGRDIL (250 aa). An intrachain disulfide couples C139 to C384. 3 residues coordinate [4Fe-4S] cluster: C146, C150, and C153. S-adenosyl-L-methionine is bound by residues 210 to 211, S242, 264 to 266, and N341; these read GE and SLH. The active-site S-methylcysteine intermediate is the C384.

Belongs to the radical SAM superfamily. RlmN family. The cofactor is [4Fe-4S] cluster.

Its subcellular location is the cytoplasm. The enzyme catalyses adenosine(2503) in 23S rRNA + 2 reduced [2Fe-2S]-[ferredoxin] + 2 S-adenosyl-L-methionine = 2-methyladenosine(2503) in 23S rRNA + 5'-deoxyadenosine + L-methionine + 2 oxidized [2Fe-2S]-[ferredoxin] + S-adenosyl-L-homocysteine. It catalyses the reaction adenosine(37) in tRNA + 2 reduced [2Fe-2S]-[ferredoxin] + 2 S-adenosyl-L-methionine = 2-methyladenosine(37) in tRNA + 5'-deoxyadenosine + L-methionine + 2 oxidized [2Fe-2S]-[ferredoxin] + S-adenosyl-L-homocysteine. Functionally, specifically methylates position 2 of adenine 2503 in 23S rRNA and position 2 of adenine 37 in tRNAs. m2A2503 modification seems to play a crucial role in the proofreading step occurring at the peptidyl transferase center and thus would serve to optimize ribosomal fidelity. The protein is Dual-specificity RNA methyltransferase RlmN of Sinorhizobium medicae (strain WSM419) (Ensifer medicae).